A 281-amino-acid chain; its full sequence is Probable endonuclease 4 (281 aa).

Zn(2+) is bound by residues His67, His107, Glu144, Asp178, His181, His215, Asp228, His230, and Glu260.

It belongs to the AP endonuclease 2 family. Zn(2+) is required as a cofactor.

The catalysed reaction is Endonucleolytic cleavage to 5'-phosphooligonucleotide end-products.. Functionally, endonuclease IV plays a role in DNA repair. It cleaves phosphodiester bonds at apurinic or apyrimidinic (AP) sites, generating a 3'-hydroxyl group and a 5'-terminal sugar phosphate. This Methanocorpusculum labreanum (strain ATCC 43576 / DSM 4855 / Z) protein is Probable endonuclease 4.